Here is a 436-residue protein sequence, read N- to C-terminus: Chorismate synthase, chloroplastic (436 aa).

Positions 1–24 (MASSSLTSKSILGSTKLGSSSLPS) are disordered. The N-terminal 50 residues, 1–50 (MASSSLTSKSILGSTKLGSSSLPSELRRLSSPAVQISLRTQTRKNFQIQA), are a transit peptide targeting the chloroplast.

The protein belongs to the chorismate synthase family. Homotetramer. It depends on FMNH2 as a cofactor.

The protein resides in the plastid. The protein localises to the chloroplast. The catalysed reaction is 5-O-(1-carboxyvinyl)-3-phosphoshikimate = chorismate + phosphate. It participates in metabolic intermediate biosynthesis; chorismate biosynthesis; chorismate from D-erythrose 4-phosphate and phosphoenolpyruvate: step 7/7. Functionally, catalyzes the last common step of the biosynthesis of aromatic amino acids, produced via the shikimic acid pathway. The sequence is that of Chorismate synthase, chloroplastic (EMB1144) from Arabidopsis thaliana (Mouse-ear cress).